Reading from the N-terminus, the 544-residue chain is Chromatin assembly factor 1 subunit A (544 aa).

Over residues Met-1 to Cys-22 the composition is skewed to polar residues. Disordered regions lie at residues Met-1 to Glu-52, Ile-67 to Glu-117, and Gln-138 to Leu-160. The span at Ser-23–Ser-35 shows a compositional bias: low complexity. Positions Pro-36–Ala-47 are enriched in polar residues. Residues Lys-56–Arg-170 are interaction with DNA and pcn1/PCNA. Residues Ala-74–Glu-117 show a composition bias toward basic and acidic residues. The stretch at Lys-76 to Asn-176 forms a coiled coil. The PCNA-interaction protein (PIP box) motif lies at Gln-172 to Phe-179. The tract at residues Ser-325–Thr-396 is interaction with histones H3/H4. The segment covering Asp-351–Lys-388 has biased composition (acidic residues). The interval Asp-351–Ser-400 is disordered.

This sequence belongs to the RLF2 family. In terms of assembly, component of chromatin assembly factor 1 (CAF-1), composed of pcf1, pcf2 and pcf3. Interacts (via PIP motif) with pcn1/PCNA; the interaction is direct and occurs during S-phase. Interacts with swi6 at the G1/S-phase transition and early S-phase, but not in the G2 phase. The CAF-1 complex interacts with histone H3/H4 dimers.

The protein localises to the nucleus. In terms of biological role, acts as a component of the histone chaperone complex chromatin assembly factor 1 (CAF-1), which assembles histone octamers onto DNA during replication and repair. CAF-1 performs the first step of the nucleosome assembly process, bringing newly synthesized histones H3 and H4 to replicating DNA; histones H2A/H2B can bind to this chromatin precursor subsequent to DNA replication to complete the histone octamer. Plays a role in the maintenance of heterochromatin. This chain is Chromatin assembly factor 1 subunit A, found in Schizosaccharomyces pombe (strain 972 / ATCC 24843) (Fission yeast).